A 275-amino-acid chain; its full sequence is MPIKVYKPTTPGRRNMSVLTYEEITKEAPEKSLIEPLKKHAGRNNRGVITTRHRGGGNKRFYRIIDFRRDKWGIPAKVAAIEYDPNRTAFIALLHYADGEKRYILAPLGLKVGDIVQSGPGAPIRVGNALPLREIPLGTQVHNVELYPGRGGQLVRAAGAVAQVVAKIDNYVHLRLPSGEIRMVHADCMATIGQVGNLDHQNVSIGKAGRKRHMGWRPAVRGSAMTPRDHPHGGGEGKAPRGMPPKTPWGKPALGKRTRRNKKSDRFIIRRRYEA.

Residues 221–275 (RGSAMTPRDHPHGGGEGKAPRGMPPKTPWGKPALGKRTRRNKKSDRFIIRRRYEA) are disordered. Residues 227–239 (PRDHPHGGGEGKA) are compositionally biased toward basic and acidic residues. Over residues 254–263 (LGKRTRRNKK) the composition is skewed to basic residues. Basic and acidic residues predominate over residues 264–275 (SDRFIIRRRYEA).

The protein belongs to the universal ribosomal protein uL2 family. As to quaternary structure, part of the 50S ribosomal subunit. Forms a bridge to the 30S subunit in the 70S ribosome.

Its function is as follows. One of the primary rRNA binding proteins. Required for association of the 30S and 50S subunits to form the 70S ribosome, for tRNA binding and peptide bond formation. It has been suggested to have peptidyltransferase activity; this is somewhat controversial. Makes several contacts with the 16S rRNA in the 70S ribosome. The polypeptide is Large ribosomal subunit protein uL2 (Thermomicrobium roseum (strain ATCC 27502 / DSM 5159 / P-2)).